Consider the following 466-residue polypeptide: MTEVLHFPSSPSASHSSSSSSSSPSPSSLSYASRSNATLLISSDHNRRNPVARFDQDVDFHASIEEQDLRRRSSTDGGEEDDGGEDQISLLALLVAIFRRSLISCKSNRRELCSMEIGWPTNVRHVAHVTFDRFNGFLGLPVEFEPEVPRRAPSASATVFGVSTESMQLSYDSRGNCVPTILLLMQNCLYSQGGLQAEGIFRLTAENSEEEAVREQLNRGFIPERIDVHCLAGLIKAWFRELPTSVLDSLSPEQVMQCQTEEENVELVRLLPPTEAALLDWAINLMADVVQYEHLNKMNSRNIAMVFAPNMTQMDDPLTALMYAVQVMNFLKTLIEKTLRERQDSVVEQAHAFPLEPSDESGHQSPSQSLAFNTSEQSEETQSDNIENAENQSSSSEISDELTLENNACEQRETDFGKYRTGRLSDSSQQVVLNLDPPAQWPVGRTKGLTNLSRVGSRVERTEAWR.

Disordered stretches follow at residues 1 to 31 (MTEV…SLSY) and 65 to 84 (EEQD…DDGG). The span at 8–31 (PSSPSASHSSSSSSSSPSPSSLSY) shows a compositional bias: low complexity. Basic and acidic residues predominate over residues 65–74 (EEQDLRRRSS). One can recognise a CRIB domain in the interval 117–130 (IGWPTNVRHVAHVT). The 181-residue stretch at 162–342 (VSTESMQLSY…TLIEKTLRER (181 aa)) folds into the Rho-GAP domain. The segment at 354-402 (PLEPSDESGHQSPSQSLAFNTSEQSEETQSDNIENAENQSSSSEISDEL) is disordered. Polar residues-rich tracts occupy residues 363–376 (HQSP…NTSE) and 383–397 (SDNI…SSSE).

Functionally, acts as a GTPase activator for the Rac-type GTPase by converting it to an inactive GDP-bound state. The chain is Rho GTPase-activating protein 1 (ROPGAP1) from Arabidopsis thaliana (Mouse-ear cress).